The primary structure comprises 1128 residues: Major DNA-binding protein (1128 aa).

A required for nuclear localization region spans residues 1104–1128 (LGGGGQGSGGRRKRRLATVLPGLEV).

The protein belongs to the herpesviridae major DNA-binding protein family. In terms of assembly, homooligomers. Forms double-helical filaments necessary for the formation of replication compartments within the host nucleus. Interacts with the origin-binding protein. Interacts with the helicase primase complex; this interaction stimulates primer synthesis activity of the helicase-primase complex. Interacts with the DNA polymerase. Interacts with the alkaline exonuclease; this interaction increases its nuclease processivity.

Its subcellular location is the virion tegument. It is found in the host nucleus. Plays several crucial roles in viral infection. Participates in the opening of the viral DNA origin to initiate replication by interacting with the origin-binding protein. May disrupt loops, hairpins and other secondary structures present on ssDNA to reduce and eliminate pausing of viral DNA polymerase at specific sites during elongation. Promotes viral DNA recombination by performing strand-transfer, characterized by the ability to transfer a DNA strand from a linear duplex to a complementary single-stranded DNA circle. Can also catalyze the renaturation of complementary single strands. Additionally, reorganizes the host cell nucleus, leading to the formation of prereplicative sites and replication compartments. This process is driven by the protein which can form double-helical filaments in the absence of DNA. This Homo sapiens (Human) protein is Major DNA-binding protein.